We begin with the raw amino-acid sequence, 134 residues long: Mini-ribonuclease 3 (134 aa).

Residue Asp22 is part of the active site.

It belongs to the MrnC RNase family. Homodimer. The cofactor is Mg(2+).

Its subcellular location is the cytoplasm. Involved in correct processing of both the 5' and 3' ends of 23S rRNA precursor. Processes 30S rRNA precursor transcript even in absence of ribonuclease 3 (Rnc); Rnc processes 30S rRNA into smaller rRNA precursors. This Staphylococcus aureus (strain NCTC 8325 / PS 47) protein is Mini-ribonuclease 3.